The chain runs to 156 residues: Transcriptional repressor NrdR (156 aa).

Residues 3 to 34 (CPKCNSTQSKVVDSRHADELNAIRRRRECENC) fold into a zinc finger. One can recognise an ATP-cone domain in the interval 49-139 (LIVVKKDGTR…VYKEFKDVDQ (91 aa)).

This sequence belongs to the NrdR family. The cofactor is Zn(2+).

In terms of biological role, negatively regulates transcription of bacterial ribonucleotide reductase nrd genes and operons by binding to NrdR-boxes. The sequence is that of Transcriptional repressor NrdR from Staphylococcus aureus (strain NCTC 8325 / PS 47).